A 190-amino-acid polypeptide reads, in one-letter code: Probable thymidylate kinase (190 aa).

Residue 7-14 (GIDGAGKT) coordinates ATP.

This sequence belongs to the thymidylate kinase family.

The catalysed reaction is dTMP + ATP = dTDP + ADP. This chain is Probable thymidylate kinase, found in Thermoplasma volcanium (strain ATCC 51530 / DSM 4299 / JCM 9571 / NBRC 15438 / GSS1).